Consider the following 448-residue polypeptide: FAD-linked oxidoreductase nodO (448 aa).

Positions 35 to 206 (PEHFPLAIVK…IRFFLKTCPL (172 aa)) constitute an FAD-binding PCMH-type domain.

Belongs to the oxygen-dependent FAD-linked oxidoreductase family. Requires FAD as cofactor.

It participates in secondary metabolite biosynthesis. Functionally, FAD-linked oxidoreductase; part of the gene cluster that mediates the biosynthesis of the indole diterpenes nodulisporic acids (NA). Nodulisporic acid A (NAA) and its chemically modified derivatives are of particular significance because of their highly potent insecticidal activity against blood-feeding arthropods and lack of observable adverse effects on mammals, in particular the tremogenicity associated with the paspaline-derived IDTs is not observed. The geranylgeranyl diphosphate (GGPP) synthase ggs1, localized outside of the cluster, is proposed to catalyze the first step in nodulisporic acid biosynthesis via conversion of farnesyl pyrophosphate and isopentyl pyrophosphate into geranylgeranyl pyrophosphate (GGPP). Condensation of indole-3-glycerol phosphate with GGPP by the prenyl transferase nodC then forms 3-geranylgeranylindole (3-GGI). Epoxidation by the FAD-dependent monooxygenase nodM leads to a single-epoxidized-GGI that is substrate of the terpene cyclase nodB for cyclization to yield emindole SB. The terminal methyl carbon, C28, of emindole SB is then oxidized by the cytochrome P450 monooxygenase nodW to produce nodulisporic acid F (NAF), the pentacyclic core of NAA. NAF is converted to nodulisporic acid E (NAE) via prenylation. This step is probably performed by one of the indole diterpene prenyltransferases nodD1 or nodD2. Several oxidation steps performed by the FAD-linked oxidoreductase nodO and one of the cytochrome P450 monooxygenase nodR, nodX or nodZ further convert NAE to nodulisporic acid D (NAD). NAD is substrate of cytochrome P450 monooxygenase nodJ to produce the precursor of nodulisporic acid C (NAC), converted to NAC by one of the indole diterpene prenyltransferases nodD1 or nodD2. The FAD-dependent monooxygenase nodY2 then oxidizes NAC to nodulisporic acid B (NAB). Finally NAB is converted to NAA by one of the cytochrome P450 monooxygenases nodR, nodX or nodZ. The protein is FAD-linked oxidoreductase nodO of Hypoxylon pulicicidum.